Here is a 97-residue protein sequence, read N- to C-terminus: Putative pterin-4-alpha-carbinolamine dehydratase (97 aa).

Belongs to the pterin-4-alpha-carbinolamine dehydratase family.

The catalysed reaction is (4aS,6R)-4a-hydroxy-L-erythro-5,6,7,8-tetrahydrobiopterin = (6R)-L-erythro-6,7-dihydrobiopterin + H2O. The protein is Putative pterin-4-alpha-carbinolamine dehydratase of Dinoroseobacter shibae (strain DSM 16493 / NCIMB 14021 / DFL 12).